We begin with the raw amino-acid sequence, 278 residues long: Dermonecrotic toxin LlSicTox-alphaIII3ii (278 aa).

His-5 is a catalytic residue. Residues Glu-25 and Asp-27 each contribute to the Mg(2+) site. His-40 (nucleophile) is an active-site residue. The cysteines at positions 44 and 50 are disulfide-linked. Mg(2+) is bound at residue Asp-84.

The protein belongs to the arthropod phospholipase D family. Class I subfamily. Requires Mg(2+) as cofactor. In terms of tissue distribution, expressed by the venom gland.

Its subcellular location is the secreted. The catalysed reaction is an N-(acyl)-sphingosylphosphocholine = an N-(acyl)-sphingosyl-1,3-cyclic phosphate + choline. The enzyme catalyses an N-(acyl)-sphingosylphosphoethanolamine = an N-(acyl)-sphingosyl-1,3-cyclic phosphate + ethanolamine. It carries out the reaction a 1-acyl-sn-glycero-3-phosphocholine = a 1-acyl-sn-glycero-2,3-cyclic phosphate + choline. It catalyses the reaction a 1-acyl-sn-glycero-3-phosphoethanolamine = a 1-acyl-sn-glycero-2,3-cyclic phosphate + ethanolamine. In terms of biological role, dermonecrotic toxins cleave the phosphodiester linkage between the phosphate and headgroup of certain phospholipids (sphingolipid and lysolipid substrates), forming an alcohol (often choline) and a cyclic phosphate. This toxin acts on sphingomyelin (SM). It may also act on ceramide phosphoethanolamine (CPE), lysophosphatidylcholine (LPC) and lysophosphatidylethanolamine (LPE), but not on lysophosphatidylserine (LPS), and lysophosphatidylglycerol (LPG). It acts by transphosphatidylation, releasing exclusively cyclic phosphate products as second products. Induces dermonecrosis, hemolysis, increased vascular permeability, edema, inflammatory response, and platelet aggregation. This Loxosceles laeta (South American recluse spider) protein is Dermonecrotic toxin LlSicTox-alphaIII3ii.